The primary structure comprises 473 residues: Allene oxide synthase CYP74A2 (473 aa).

Lys88, His119, and Lys123 together coordinate heme b. (13S)-hydroperoxy-(9Z,11E)-octadecadienoate-binding residues include Ser199 and Lys282. Heme b-binding residues include Lys424 and Cys426.

Belongs to the cytochrome P450 family. Heme b serves as cofactor.

It catalyses the reaction (13S)-hydroperoxy-(9Z,11E,15Z)-octadecatrienoate = (9Z,13S,15Z)-12,13-epoxyoctadeca-9,11,15-trienoate + H2O. The catalysed reaction is (13S)-hydroperoxy-(9Z,11E)-octadecadienoate = (9Z,13S)-12,13-epoxyoctadeca-9,11-dienoate + H2O. It participates in lipid metabolism; oxylipin biosynthesis. Its function is as follows. Cytochrome P450 enzyme involved in the biosynthesis of oxylipin jasmonates, important phytohormones acting as growth regulators and signaling molecules for plant defense. Functions as an allene oxide synthase that converts hydroperoxy fatty acids to unstable allene epoxides. Catalyzes the dehydration of 13-HPOTE ((13S)-hydroperoxy-(9Z,11E,15Z)-octadecatrienoate). Also catalyzes the dehydration of 13-HPODE ((13S)-hydroperoxy-(9Z,11E)-octadecadienoate). In Parthenium argentatum (Guayule rubber plant), this protein is Allene oxide synthase CYP74A2.